The chain runs to 366 residues: NAD(P)H-quinone oxidoreductase subunit 1, chloroplastic (366 aa).

Transmembrane regions (helical) follow at residues 28-48 (IWLL…VLVI), 105-125 (IAVI…HLVL), 128-148 (LSIG…GLLM), 250-270 (SGIK…VSSL), 271-291 (FVTV…FIFI), 303-323 (IFGM…FLFI), and 346-366 (FLLP…LLSL).

The protein belongs to the complex I subunit 1 family. In terms of assembly, NDH is composed of at least 16 different subunits, 5 of which are encoded in the nucleus.

The protein resides in the plastid. It is found in the chloroplast thylakoid membrane. The catalysed reaction is a plastoquinone + NADH + (n+1) H(+)(in) = a plastoquinol + NAD(+) + n H(+)(out). The enzyme catalyses a plastoquinone + NADPH + (n+1) H(+)(in) = a plastoquinol + NADP(+) + n H(+)(out). NDH shuttles electrons from NAD(P)H:plastoquinone, via FMN and iron-sulfur (Fe-S) centers, to quinones in the photosynthetic chain and possibly in a chloroplast respiratory chain. The immediate electron acceptor for the enzyme in this species is believed to be plastoquinone. Couples the redox reaction to proton translocation, and thus conserves the redox energy in a proton gradient. The chain is NAD(P)H-quinone oxidoreductase subunit 1, chloroplastic from Nandina domestica (Heavenly bamboo).